A 2273-amino-acid polypeptide reads, in one-letter code: Acetyl-CoA carboxylase, mitochondrial (2273 aa).

The N-terminal 104 residues, 1–104 (KGKTITHGQS…RGNIHKHTRL (104 aa)), are a transit peptide targeting the mitochondrion. The Biotin carboxylation domain maps to 134–635 (VISKILIANN…STGWLDDLIL (502 aa)). The ATP-grasp domain occupies 292–484 (KTNFVSVPDD…LPATQLQIAM (193 aa)). 332–337 (GGGGKG) provides a ligand contact to ATP. Arg-459 is a catalytic residue. In terms of domain architecture, Biotinyl-binding spans 763-837 (LEAELNPTQV…EAGDVIAKLT (75 aa)). An N6-biotinyllysine modification is found at Lys-804. Residues 1532-1867 (PYSVKDWLQP…KRDMSPPLLE (336 aa)) enclose the CoA carboxyltransferase N-terminal domain. Residues 1532-2187 (PYSVKDWLQP…EGQVIKRLQK (656 aa)) form a carboxyltransferase region. CoA contacts are provided by Arg-1776, Lys-2080, and Arg-2082. Residues 1871-2187 (RWDRDVDFKP…EGQVIKRLQK (317 aa)) enclose the CoA carboxyltransferase C-terminal domain.

It depends on biotin as a cofactor.

The protein resides in the mitochondrion. It catalyses the reaction hydrogencarbonate + acetyl-CoA + ATP = malonyl-CoA + ADP + phosphate + H(+). It carries out the reaction N(6)-biotinyl-L-lysyl-[protein] + hydrogencarbonate + ATP = N(6)-carboxybiotinyl-L-lysyl-[protein] + ADP + phosphate + H(+). The protein operates within lipid metabolism; malonyl-CoA biosynthesis; malonyl-CoA from acetyl-CoA: step 1/1. In terms of biological role, catalyzes the rate-limiting reaction in the mitochondrial fatty acid synthesis (FAS) type II pathway. Responsible for the production of the mitochondrial malonyl-CoA, used for the biosynthesis of the cofactor lipoic acid. This protein carries three functions: biotin carboxyl carrier protein, biotin carboxylase, and carboxyltransferase. This chain is Acetyl-CoA carboxylase, mitochondrial (HFA1), found in Saccharomyces cerevisiae (strain RM11-1a) (Baker's yeast).